The following is a 288-amino-acid chain: MEIKLEQLGYCYQKNSPFEKRALLDVNVSFDSGSYSAIIGHTGSGKSTLLQHLNALLMPTEGKITVGDREIVAGVKQKKLRDLRKKVGIVFQFPEAQLFEETVEKDICFGPMNFGVSEEDAKLRAKKVIYEVGLTEEILSRSPFELSGGQMRRVAIAGVLAMDPEVLVLDEPTAGLDPHGREEIMEMFYNLHKEKGLTTVLVTHSMEDAARYAEKIVLMKAGTVLQIGTPREIFAKPDELVDLGLSVPDVVRFQGLFERKFDVKLTKTCLTIDELTTEMAPYLAKGGA.

One can recognise an ABC transporter domain in the interval 3-246; sequence IKLEQLGYCY…PDELVDLGLS (244 aa). 40–47 provides a ligand contact to ATP; that stretch reads GHTGSGKS.

This sequence belongs to the ABC transporter superfamily. Energy-coupling factor EcfA family. As to quaternary structure, forms a stable energy-coupling factor (ECF) transporter complex composed of 2 membrane-embedded substrate-binding proteins (S component), 2 ATP-binding proteins (A component) and 2 transmembrane proteins (T component).

It is found in the cell membrane. ATP-binding (A) component of a common energy-coupling factor (ECF) ABC-transporter complex. Unlike classic ABC transporters this ECF transporter provides the energy necessary to transport a number of different substrates. This chain is Energy-coupling factor transporter ATP-binding protein EcfA2, found in Listeria monocytogenes serovar 1/2a (strain ATCC BAA-679 / EGD-e).